The sequence spans 114 residues: Non-specific lipid-transfer protein 1 (114 aa).

An N-terminal signal peptide occupies residues 1 to 23 (MEMVSKIACFVLLCMVVVAPHAE). Intrachain disulfides connect cysteine 27–cysteine 73, cysteine 37–cysteine 50, cysteine 51–cysteine 96, and cysteine 71–cysteine 110.

This sequence belongs to the plant LTP family.

Its function is as follows. Plant non-specific lipid-transfer proteins transfer phospholipids as well as galactolipids across membranes. May play a role in wax or cutin deposition in the cell walls of expanding epidermal cells and certain secretory tissues. This Solanum lycopersicum (Tomato) protein is Non-specific lipid-transfer protein 1 (TSW12).